Here is a 1412-residue protein sequence, read N- to C-terminus: DNA-directed RNA polymerase subunit beta' (1412 aa).

Cys70, Cys72, Cys85, and Cys88 together coordinate Zn(2+). Residues Asp460, Asp462, and Asp464 each contribute to the Mg(2+) site. 4 residues coordinate Zn(2+): Cys814, Cys888, Cys895, and Cys898. The segment at 1378 to 1412 (EREAARQLANPFEDAPVTVDADAPQSDAGQEGSAE) is disordered.

It belongs to the RNA polymerase beta' chain family. The RNAP catalytic core consists of 2 alpha, 1 beta, 1 beta' and 1 omega subunit. When a sigma factor is associated with the core the holoenzyme is formed, which can initiate transcription. Requires Mg(2+) as cofactor. The cofactor is Zn(2+).

The enzyme catalyses RNA(n) + a ribonucleoside 5'-triphosphate = RNA(n+1) + diphosphate. Functionally, DNA-dependent RNA polymerase catalyzes the transcription of DNA into RNA using the four ribonucleoside triphosphates as substrates. This is DNA-directed RNA polymerase subunit beta' from Bordetella petrii (strain ATCC BAA-461 / DSM 12804 / CCUG 43448).